We begin with the raw amino-acid sequence, 389 residues long: Lipid-A-disaccharide synthase (389 aa).

This sequence belongs to the LpxB family.

The enzyme catalyses a lipid X + a UDP-2-N,3-O-bis[(3R)-3-hydroxyacyl]-alpha-D-glucosamine = a lipid A disaccharide + UDP + H(+). The protein operates within bacterial outer membrane biogenesis; LPS lipid A biosynthesis. Its function is as follows. Condensation of UDP-2,3-diacylglucosamine and 2,3-diacylglucosamine-1-phosphate to form lipid A disaccharide, a precursor of lipid A, a phosphorylated glycolipid that anchors the lipopolysaccharide to the outer membrane of the cell. This chain is Lipid-A-disaccharide synthase, found in Burkholderia multivorans (strain ATCC 17616 / 249).